The chain runs to 1714 residues: uncharacterized protein (1714 aa).

2 disordered regions span residues 47–70 and 584–616; these read SVAGSEKNASDDDSDASSVMSDDL and KKTGKGGWSGQKQQKPGAGGKKGATKESGKSKK. ATP contacts are provided by residues 607 to 614 and 806 to 813; these read ATKESGKS and APTSAGKT. The span at 607-616 shows a compositional bias: basic and acidic residues; the sequence is ATKESGKSKK. Residues 793–963 form the Helicase ATP-binding domain; it reads LDSVDRGNSA…WLNSSEQAKS (171 aa). A DEVH box motif is present at residues 913–916; that stretch reads DEVH. The disordered stretch occupies residues 1197–1223; the sequence is KRKRDDAEKKKKGDKDEDAGPEKDDDE. Residues 1199 to 1218 show a composition bias toward basic and acidic residues; it reads KRDDAEKKKKGDKDEDAGPE. Residues 1237–1391 enclose the Helicase C-terminal domain; sequence ALERFKLRGR…NPPFTVLFLL (155 aa).

This sequence belongs to the helicase family. SKI2 subfamily.

It localises to the nucleus. This is an uncharacterized protein from Caenorhabditis elegans.